The chain runs to 342 residues: GTPase Obg (342 aa).

Positions 1–159 (MKFLDLCKVY…RTIWLRLKLI (159 aa)) constitute an Obg domain. The OBG-type G domain maps to 160–327 (ADAGLLGLPN…VLRALWAEID (168 aa)). Residues 166 to 173 (GLPNAGKS), 191 to 195 (FTTLV), 212 to 215 (DIPG), 279 to 282 (NKID), and 308 to 310 (SGV) each bind GTP. Mg(2+) contacts are provided by serine 173 and threonine 193.

It belongs to the TRAFAC class OBG-HflX-like GTPase superfamily. OBG GTPase family. As to quaternary structure, monomer. It depends on Mg(2+) as a cofactor.

The protein resides in the cytoplasm. An essential GTPase which binds GTP, GDP and possibly (p)ppGpp with moderate affinity, with high nucleotide exchange rates and a fairly low GTP hydrolysis rate. Plays a role in control of the cell cycle, stress response, ribosome biogenesis and in those bacteria that undergo differentiation, in morphogenesis control. In Cereibacter sphaeroides (strain KD131 / KCTC 12085) (Rhodobacter sphaeroides), this protein is GTPase Obg.